The chain runs to 210 residues: CLAVATA3/ESR (CLE)-related protein 4D (210 aa).

A signal peptide spans 1–21; the sequence is MAKNAMLCLLILSVVLALAFA. The segment at 21-83 is required for secretion from the host cytoplasm to the host apoplasm; it reads ATNKKDDEEP…SNQLPNNNWM (63 aa). 2 N-linked (GlcNAc...) asparagine glycosylation sites follow: asparagine 32 and asparagine 59. The tract at residues 115-210 is disordered; the sequence is RRKTGTHSQR…APAGPDPIHH (96 aa). 4 stretches are compositionally biased toward basic and acidic residues: residues 125–137, 144–158, 165–179, and 186–200; these read HHEETTLEQEKRG, PIHHQDTTFEQEKRG, PIHHQDTTLEQEKRV, and PIHHQDTKFEQEKRG. An A-1 repeat occupies 127–135; it reads EETTLEQEK. The tract at residues 129 to 198 is 4 X approximate repeat A; the sequence is TTLEQEKRGA…HQDTKFEQEK (70 aa). Residues 136 to 147 form a CLE-1 repeat; sequence RGAPAGPDPIHH. Residues 136–210 are 4 X approximate repeat CLE; sequence RGAPAGPDPI…APAGPDPIHH (75 aa). The stretch at 148–156 is one A-2 repeat; sequence QDTTFEQEK. The CLE-2 repeat unit spans residues 157–168; sequence RGAPAGPDPIHH. An A-3 repeat occupies 169–177; it reads QDTTLEQEK. A CLE-3 repeat occupies 178 to 189; it reads RVAGAGPDPIHH. One copy of the A-4 repeat lies at 190 to 198; the sequence is QDTKFEQEK. A CLE-4 repeat occupies 199-210; that stretch reads RGAPAGPDPIHH.

Belongs to the CLV3/ESR signal peptide family. Highly expressed exclusively within the dorsal esophageal gland cell during syncytium formation in host plants.

It localises to the secreted. The protein localises to the host cytoplasm. Its subcellular location is the host extracellular space. The protein resides in the extracellular space. It is found in the apoplast. Functionally, mimics host plant CLE extracellular signal peptides that regulate cell fate. May play a role in the differentiation or division of feeding cells (syncytia) induced in plant roots during infection. The polypeptide is CLAVATA3/ESR (CLE)-related protein 4D (CLE-4D) (Globodera rostochiensis (Golden nematode worm)).